Consider the following 378-residue polypeptide: Myoglobin (378 aa).

H332 provides a ligand contact to heme.

This sequence belongs to the indoleamine 2,3-dioxygenase family. Homodimer. Heme is required as a cofactor.

Its function is as follows. Serves a reserve supply of oxygen and facilitates the movement of oxygen within muscles. This is Myoglobin from Haliotis madaka (Giant abalone).